The following is a 78-amino-acid chain: MKADIHPTYHETTVNCTCGSTFTTRSTKENGVVNAEVCSQCHPFYTGKQKILDVGGRVEKFERRFGRRRPGEKVGGAK.

Zn(2+) contacts are provided by Cys16, Cys18, Cys38, and Cys41.

The protein belongs to the bacterial ribosomal protein bL31 family. Type A subfamily. Part of the 50S ribosomal subunit. Zn(2+) is required as a cofactor.

Functionally, binds the 23S rRNA. This is Large ribosomal subunit protein bL31 from Frankia alni (strain DSM 45986 / CECT 9034 / ACN14a).